The following is a 164-amino-acid chain: MAKKKTQQKTNAMRMVEQHKVPYKEYEFAWSEDHLSAESVAESLGIEKGRIFKTLVTVGNKTGPVVAVIPGNQELDLKKLAKASGNKKVEMLHLKDLEATTGYIRGGCSPIGMKKQFPTYLAEEAQQYSAIIVSAGKRGMQIELAPEAILSLTNGQFAEITTKE.

It belongs to the prolyl-tRNA editing family. YbaK/EbsC subfamily.

In terms of biological role, affects the expression of the receptor, named binding substance, that mediates mating aggregate formation. Could be a regulatory protein that suppresses the function or expression of ebsA and/or ebsMB. The polypeptide is Putative Cys-tRNA(Pro)/Cys-tRNA(Cys) deacylase EbsC (Enterococcus faecalis (strain ATCC 700802 / V583)).